A 181-amino-acid chain; its full sequence is MDNLKEEETNEINYIIDQLQKLNKKFKIYTVQRFKEEEPFNKYISESVSKKTRLLIHGTRCSSVIPILQTGLKIRPSTSVHFSGKVYGEGNYFSEHVQKSLNYTGWDNDQILLIYEVHVGNEYIYEGWYNGDRGIKLNYNELLQNGYNSTYVKAGNGLQNSEIISYNEDQSKIKYIIHITK.

Positions 1-181 constitute a PARP catalytic domain; sequence MDNLKEEETN…KIKYIIHITK (181 aa).

It catalyses the reaction NAD(+) + (ADP-D-ribosyl)n-acceptor = nicotinamide + (ADP-D-ribosyl)n+1-acceptor + H(+).. The chain is Putative poly [ADP-ribose] polymerase-like 100L from Invertebrate iridescent virus 6 (IIV-6).